The chain runs to 159 residues: Small ribosomal subunit protein uS9 (159 aa).

This sequence belongs to the universal ribosomal protein uS9 family.

This chain is Small ribosomal subunit protein uS9, found in Rickettsia rickettsii (strain Iowa).